The following is a 487-amino-acid chain: Rhoptry apical surface protein 1 (487 aa).

Residues 337 to 487 (EVAMSGRGGH…EEEQPLLFTQ (151 aa)) are disordered. Basic and acidic residues-rich tracts occupy residues 385–399 (DGIR…DRRA) and 454–475 (EKNE…GVEY).

Interacts with RASP2.

The protein resides in the cytoplasmic vesicle. Its subcellular location is the secretory vesicle. The protein localises to the rhoptry membrane. In Toxoplasma gondii (strain ATCC 50853 / GT1), this protein is Rhoptry apical surface protein 1.